We begin with the raw amino-acid sequence, 185 residues long: Elongation factor P (185 aa).

It belongs to the elongation factor P family.

The protein localises to the cytoplasm. Its pathway is protein biosynthesis; polypeptide chain elongation. In terms of biological role, involved in peptide bond synthesis. Stimulates efficient translation and peptide-bond synthesis on native or reconstituted 70S ribosomes in vitro. Probably functions indirectly by altering the affinity of the ribosome for aminoacyl-tRNA, thus increasing their reactivity as acceptors for peptidyl transferase. This is Elongation factor P from Clostridium tetani (strain Massachusetts / E88).